A 245-amino-acid chain; its full sequence is 1-(5-phosphoribosyl)-5-[(5-phosphoribosylamino)methylideneamino] imidazole-4-carboxamide isomerase (245 aa).

Residue Asp-8 is the Proton acceptor of the active site. Asp-131 (proton donor) is an active-site residue.

It belongs to the HisA/HisF family.

The protein resides in the cytoplasm. The enzyme catalyses 1-(5-phospho-beta-D-ribosyl)-5-[(5-phospho-beta-D-ribosylamino)methylideneamino]imidazole-4-carboxamide = 5-[(5-phospho-1-deoxy-D-ribulos-1-ylimino)methylamino]-1-(5-phospho-beta-D-ribosyl)imidazole-4-carboxamide. Its pathway is amino-acid biosynthesis; L-histidine biosynthesis; L-histidine from 5-phospho-alpha-D-ribose 1-diphosphate: step 4/9. In Neisseria gonorrhoeae (strain ATCC 700825 / FA 1090), this protein is 1-(5-phosphoribosyl)-5-[(5-phosphoribosylamino)methylideneamino] imidazole-4-carboxamide isomerase.